A 206-amino-acid chain; its full sequence is Small ribosomal subunit protein uS4 (206 aa).

A disordered region spans residues 18–46; sequence NIWGRPKSPVNRREYGPGQHGQRRKGKLS. One can recognise an S4 RNA-binding domain in the interval 94–156; that stretch reads RRLDAVVYRA…SKQNVAVLEA (63 aa).

This sequence belongs to the universal ribosomal protein uS4 family. As to quaternary structure, part of the 30S ribosomal subunit. Contacts protein S5. The interaction surface between S4 and S5 is involved in control of translational fidelity.

Functionally, one of the primary rRNA binding proteins, it binds directly to 16S rRNA where it nucleates assembly of the body of the 30S subunit. With S5 and S12 plays an important role in translational accuracy. The chain is Small ribosomal subunit protein uS4 from Ruegeria sp. (strain TM1040) (Silicibacter sp.).